Consider the following 404-residue polypeptide: Cysteine desulfurase IscS (404 aa).

Pyridoxal 5'-phosphate is bound by residues 75-76, Asn-155, Gln-183, and 203-205; these read AT and SGH. Lys-206 is subject to N6-(pyridoxal phosphate)lysine. Position 243 (Thr-243) interacts with pyridoxal 5'-phosphate. Cys-328 serves as the catalytic Cysteine persulfide intermediate. Cys-328 contacts [2Fe-2S] cluster.

The protein belongs to the class-V pyridoxal-phosphate-dependent aminotransferase family. NifS/IscS subfamily. Homodimer. Forms a heterotetramer with IscU, interacts with other sulfur acceptors. The cofactor is pyridoxal 5'-phosphate.

The protein localises to the cytoplasm. The enzyme catalyses (sulfur carrier)-H + L-cysteine = (sulfur carrier)-SH + L-alanine. The protein operates within cofactor biosynthesis; iron-sulfur cluster biosynthesis. Functionally, master enzyme that delivers sulfur to a number of partners involved in Fe-S cluster assembly, tRNA modification or cofactor biosynthesis. Catalyzes the removal of elemental sulfur atoms from cysteine to produce alanine. Functions as a sulfur delivery protein for Fe-S cluster synthesis onto IscU, an Fe-S scaffold assembly protein, as well as other S acceptor proteins. The polypeptide is Cysteine desulfurase IscS (Shewanella oneidensis (strain ATCC 700550 / JCM 31522 / CIP 106686 / LMG 19005 / NCIMB 14063 / MR-1)).